The chain runs to 287 residues: ATP synthase gamma chain (287 aa).

This sequence belongs to the ATPase gamma chain family. In terms of assembly, F-type ATPases have 2 components, CF(1) - the catalytic core - and CF(0) - the membrane proton channel. CF(1) has five subunits: alpha(3), beta(3), gamma(1), delta(1), epsilon(1). CF(0) has three main subunits: a, b and c.

It localises to the cell inner membrane. Produces ATP from ADP in the presence of a proton gradient across the membrane. The gamma chain is believed to be important in regulating ATPase activity and the flow of protons through the CF(0) complex. In Geobacter metallireducens (strain ATCC 53774 / DSM 7210 / GS-15), this protein is ATP synthase gamma chain.